The sequence spans 489 residues: Beta-dihydromenaquinone-9 omega-hydroxylase (489 aa).

Residue C435 participates in heme binding.

This sequence belongs to the cytochrome P450 family. The cofactor is heme.

It localises to the cytoplasm. It carries out the reaction beta-dihydromenaquinone-9 + 2 reduced [2Fe-2S]-[ferredoxin] + O2 + 2 H(+) = omega-hydroxy-beta-dihydromenaquinone-9 + 2 oxidized [2Fe-2S]-[ferredoxin] + H2O. Functionally, involved in the biosynthesis of sulfomenaquinone (SMK, initially named S881 on the basis of its mass), which is localized in the outer envelope of M.bovis and negatively regulates its virulence. Catalyzes the hydroxylation of beta-dihydromenaquinone-9, leading to the formation of omega-hydroxy-beta-dihydromenaquinone-9. This Mycobacterium bovis (strain ATCC BAA-935 / AF2122/97) protein is Beta-dihydromenaquinone-9 omega-hydroxylase (cyp128).